The following is a 745-amino-acid chain: Double-stranded RNA-specific editase B2 (745 aa).

Disordered stretches follow at residues 1 to 35 (MASV…RKDK) and 50 to 104 (SPGT…PLEE). The span at 20-34 (CKSKRRRRRRSKRKD) shows a compositional bias: basic residues. Residues 23 to 35 (KRRRRRRSKRKDK) are R-domain (ssRNA-binding). DRBM domains are found at residues 125–191 (TPKN…SFVQ) and 283–347 (NPVV…ALFD). Positions 414-741 (VLSSGTKCIS…VRKPPEQDQF (328 aa)) constitute an A to I editase domain. Position 438 (H438) interacts with Zn(2+). E440 acts as the Proton donor in catalysis. Zn(2+) contacts are provided by C496 and C561.

In terms of tissue distribution, brain specific.

It is found in the nucleus. Its function is as follows. Lacks editing activity. It prevents the binding of other ADAR enzymes to targets in vitro, and decreases the efficiency of these enzymes. Capable of binding to dsRNA but also to ssRNA. The polypeptide is Double-stranded RNA-specific editase B2 (Adarb2) (Mus musculus (Mouse)).